The following is a 122-amino-acid chain: Large ribosomal subunit protein uL14 (122 aa).

The protein belongs to the universal ribosomal protein uL14 family. In terms of assembly, part of the 50S ribosomal subunit. Forms a cluster with proteins L3 and L19. In the 70S ribosome, L14 and L19 interact and together make contacts with the 16S rRNA in bridges B5 and B8.

Functionally, binds to 23S rRNA. Forms part of two intersubunit bridges in the 70S ribosome. This Exiguobacterium sibiricum (strain DSM 17290 / CCUG 55495 / CIP 109462 / JCM 13490 / 255-15) protein is Large ribosomal subunit protein uL14.